The sequence spans 217 residues: MAMFLKSRGVRSCRDRRLLSDEEEETSQSSSYTLGSQASQSIQEEDVSDTDESDYSDEDEEIDLEEEYPSDEDPSEGSDSDPSWHPSDSDESDYSESDEDEATPGSQASRSSRVSPSTQQSSGLTPTPSFSRPRTRAPPRPPAPAPVRGRASAPPRPPAPVPQSTKDKVPNRPTRPVLRGPAPRRPPPPSSPNTYNKHMMETTPPIKGNNNYNWPWL.

Residues 1 to 217 form a disordered region; sequence MAMFLKSRGV…GNNNYNWPWL (217 aa). Over residues 32–42 the composition is skewed to polar residues; it reads YTLGSQASQSI. Acidic residues predominate over residues 43–79; that stretch reads QEEDVSDTDESDYSDEDEEIDLEEEYPSDEDPSEGSD. Residues 63 to 64 form an interaction with host histones H3/H4 region; that stretch reads DL. Positions 81-84 are interaction with host H2A/H2B; sequence DPSW. The segment covering 89–102 has biased composition (acidic residues); that stretch reads SDESDYSESDEDEA. The segment covering 106–132 has biased composition (low complexity); it reads SQASRSSRVSPSTQQSSGLTPTPSFSR. Pro residues predominate over residues 136–145; that stretch reads RAPPRPPAPA. The segment covering 208 to 217 has biased composition (polar residues); that stretch reads GNNNYNWPWL.

The protein belongs to the lymphocryptovirus BKRF4 family. In terms of assembly, forms a complex with the host H3/H4 dimer and histone chaperone ASF1. Also forms a complex with host H2A/H2B dimer. Interacts (via C-terminus) with BGLF2; this interaction is important for infectious virion production.

The protein resides in the virion tegument. Its subcellular location is the host nucleus. It localises to the host cytoplasm. The protein localises to the host perinuclear region. Functionally, histone-binding protein that binds to histones H2A/H2B, H3/H4 and cellular chromatin to overcome the host DNA damage response triggered by the viral genome ends. Interferes with histone ubiquitination and recruitment of repair proteins. The sequence is that of Tegument protein BKRF4 from Epstein-Barr virus (strain GD1) (HHV-4).